The sequence spans 104 residues: Pterin-4-alpha-carbinolamine dehydratase (104 aa).

Ala2 carries the N-acetylalanine modification. Residues 61–63 (DHH) and 78–81 (STHE) contribute to the substrate site.

This sequence belongs to the pterin-4-alpha-carbinolamine dehydratase family. As to quaternary structure, homotetramer and homodimer. As to expression, the major tissues expressing cDcoH are hypothalamus, kidney and liver.

Its subcellular location is the cytoplasm. It localises to the nucleus. It catalyses the reaction (4aS,6R)-4a-hydroxy-L-erythro-5,6,7,8-tetrahydrobiopterin = (6R)-L-erythro-6,7-dihydrobiopterin + H2O. Involved in tetrahydrobiopterin biosynthesis. Seems to both prevent the formation of 7-pterins and accelerate the formation of quinonoid-BH2. Coactivator for HNF1A-dependent transcription. Regulates the dimerization of homeodomain protein HNF1A and enhances its transcriptional activity. Also acts as a coactivator for HNF1B-dependent transcription. This is Pterin-4-alpha-carbinolamine dehydratase (PCBD1) from Gallus gallus (Chicken).